The following is a 216-amino-acid chain: Large ribosomal subunit protein uL1B (216 aa).

The residue at position 11 (Ser11) is a Phosphoserine.

It belongs to the universal ribosomal protein uL1 family. As to quaternary structure, component of the large ribosomal subunit (LSU). Mature yeast ribosomes consist of a small (40S) and a large (60S) subunit. The 40S small subunit contains 1 molecule of ribosomal RNA (18S rRNA) and at least 33 different proteins. The large 60S subunit contains 3 rRNA molecules (25S, 5.8S and 5S rRNA) and at least 46 different proteins. uL1 forms part of the L1 stalk.

It is found in the cytoplasm. Its function is as follows. Component of the ribosome, a large ribonucleoprotein complex responsible for the synthesis of proteins in the cell. The small ribosomal subunit (SSU) binds messenger RNAs (mRNAs) and translates the encoded message by selecting cognate aminoacyl-transfer RNA (tRNA) molecules. The large subunit (LSU) contains the ribosomal catalytic site termed the peptidyl transferase center (PTC), which catalyzes the formation of peptide bonds, thereby polymerizing the amino acids delivered by tRNAs into a polypeptide chain. The nascent polypeptides leave the ribosome through a tunnel in the LSU and interact with protein factors that function in enzymatic processing, targeting, and the membrane insertion of nascent chains at the exit of the ribosomal tunnel. uL1 forms part of the L1 stalk, a mobile element that plays a role in evacuating the exit-site tRNA. In Schizosaccharomyces pombe (strain 972 / ATCC 24843) (Fission yeast), this protein is Large ribosomal subunit protein uL1B (rpl101).